A 117-amino-acid polypeptide reads, in one-letter code: MSASSLIKWVCYLGDIAASGFLNSIATALIAVLHDAGDNMFNSKEEKKLVDILTKFYKMINKQSDITVPVGQDLQRLALLFANLRSVEIKKNNETDFSNFFTTKLPMHNKFFRYDTK.

Residues 10–32 (VCYLGDIAASGFLNSIATALIAV) traverse the membrane as a helical segment.

The protein localises to the membrane. This is an uncharacterized protein from Rickettsia conorii (strain ATCC VR-613 / Malish 7).